Reading from the N-terminus, the 375-residue chain is MLTASNTKAPEQTKVIVGMSGGVDSSVSAYLLKEQGYQVEGLFMKNWEEDDTDEYCAASQDLEDAQAICDKLDIKLHTINFATEYWDNVFEYFLAEYKAGRTPNPDIMCNKEIKFKAFLEFACEDLGADYIATGHYVQRELRDNSWKMIRGLDNNKDQSYFLYTLDEAQLAHTLFPVGHIEKPEVRAIAEKAGLITHNKKDSTGICFIGERKFKDFLGQYLPAQPGIIESAEGVAVGHHDGLMYHTLGQRKGLRIGGLADAGEEPWYVVEKDLLRNVLIVGQGHNHPRLFSKGLIANQLHWVDRKALTSSIQCTVKTRYRQEDVSCTVTPITDSATEEYQIDFTEQQSSVTPGQSVVFYKDDVCLGGGIIDTLIR.

Residues 18–25 and M44 contribute to the ATP site; that span reads GMSGGVDS. The interaction with target base in tRNA stretch occupies residues 104–106; it reads NPD. C109 serves as the catalytic Nucleophile. An intrachain disulfide couples C109 to C206. G134 is a binding site for ATP. Positions 156 to 158 are interaction with tRNA; it reads KDQ. Residue C206 is the Cysteine persulfide intermediate of the active site. The segment at 318-319 is interaction with tRNA; it reads RY.

The protein belongs to the MnmA/TRMU family.

It is found in the cytoplasm. The catalysed reaction is S-sulfanyl-L-cysteinyl-[protein] + uridine(34) in tRNA + AH2 + ATP = 2-thiouridine(34) in tRNA + L-cysteinyl-[protein] + A + AMP + diphosphate + H(+). In terms of biological role, catalyzes the 2-thiolation of uridine at the wobble position (U34) of tRNA, leading to the formation of s(2)U34. In Colwellia psychrerythraea (strain 34H / ATCC BAA-681) (Vibrio psychroerythus), this protein is tRNA-specific 2-thiouridylase MnmA.